Reading from the N-terminus, the 701-residue chain is uncharacterized protein (701 aa).

This is an uncharacterized protein from Saccharomyces cerevisiae (strain ATCC 204508 / S288c) (Baker's yeast).